Reading from the N-terminus, the 491-residue chain is Cytochrome P450 2F5 (491 aa).

Residue Cys436 coordinates heme.

It belongs to the cytochrome P450 family. Heme is required as a cofactor.

The protein resides in the endoplasmic reticulum membrane. It localises to the microsome membrane. It carries out the reaction an organic molecule + reduced [NADPH--hemoprotein reductase] + O2 = an alcohol + oxidized [NADPH--hemoprotein reductase] + H2O + H(+). In terms of biological role, cytochromes P450 are a group of heme-thiolate monooxygenases. In liver microsomes, this enzyme is involved in an NADPH-dependent electron transport pathway. It oxidizes a variety of structurally unrelated compounds, including steroids, fatty acids, and xenobiotics. This chain is Cytochrome P450 2F5 (CYP2F5), found in Gorilla gorilla gorilla (Western lowland gorilla).